Here is a 508-residue protein sequence, read N- to C-terminus: Alpha-amylase (508 aa).

A signal peptide spans M1–F19. A disulfide bridge links C46 with C102. Residues N116, R173, and D182 each contribute to the Ca(2+) site. A disulfide bridge links C156 with C175. R210 lines the chloride pocket. Catalysis depends on D212, which acts as the Nucleophile. H216 serves as a coordination point for Ca(2+). E248 acts as the Proton donor in catalysis. Chloride is bound by residues N311 and R349. Intrachain disulfides connect C383–C389 and C455–C467.

The protein belongs to the glycosyl hydrolase 13 family. In terms of assembly, monomer. Ca(2+) serves as cofactor. The cofactor is chloride.

It carries out the reaction Endohydrolysis of (1-&gt;4)-alpha-D-glucosidic linkages in polysaccharides containing three or more (1-&gt;4)-alpha-linked D-glucose units.. The protein is Alpha-amylase of Pecten maximus (King scallop).